Here is a 360-residue protein sequence, read N- to C-terminus: Phosphoserine aminotransferase (360 aa).

Residue R41 coordinates L-glutamate. Residues 75–76 (AS), W99, T152, D171, and Q194 contribute to the pyridoxal 5'-phosphate site. K195 carries the post-translational modification N6-(pyridoxal phosphate)lysine. 236 to 237 (NT) is a binding site for pyridoxal 5'-phosphate.

The protein belongs to the class-V pyridoxal-phosphate-dependent aminotransferase family. SerC subfamily. Homodimer. It depends on pyridoxal 5'-phosphate as a cofactor.

The protein localises to the cytoplasm. It catalyses the reaction O-phospho-L-serine + 2-oxoglutarate = 3-phosphooxypyruvate + L-glutamate. It carries out the reaction 4-(phosphooxy)-L-threonine + 2-oxoglutarate = (R)-3-hydroxy-2-oxo-4-phosphooxybutanoate + L-glutamate. It functions in the pathway amino-acid biosynthesis; L-serine biosynthesis; L-serine from 3-phospho-D-glycerate: step 2/3. Its pathway is cofactor biosynthesis; pyridoxine 5'-phosphate biosynthesis; pyridoxine 5'-phosphate from D-erythrose 4-phosphate: step 3/5. Its function is as follows. Catalyzes the reversible conversion of 3-phosphohydroxypyruvate to phosphoserine and of 3-hydroxy-2-oxo-4-phosphonooxybutanoate to phosphohydroxythreonine. The polypeptide is Phosphoserine aminotransferase (Porphyromonas gingivalis (strain ATCC 33277 / DSM 20709 / CIP 103683 / JCM 12257 / NCTC 11834 / 2561)).